A 150-amino-acid polypeptide reads, in one-letter code: Endoribonuclease YbeY (150 aa).

Zn(2+)-binding residues include His-116, His-120, and His-126.

It belongs to the endoribonuclease YbeY family. Zn(2+) is required as a cofactor.

The protein resides in the cytoplasm. Its function is as follows. Single strand-specific metallo-endoribonuclease involved in late-stage 70S ribosome quality control and in maturation of the 3' terminus of the 16S rRNA. The chain is Endoribonuclease YbeY from Mesomycoplasma hyopneumoniae (strain 232) (Mycoplasma hyopneumoniae).